The sequence spans 900 residues: Bifunctional uridylyltransferase/uridylyl-removing enzyme (900 aa).

Residues 1–342 form a uridylyltransferase region; it reads MPQVDPELFD…WEGESGPIVP (342 aa). A uridylyl-removing region spans residues 343-705; sequence LNSRFQVRDG…TTQREFEGGT (363 aa). The region spanning 461 to 583 is the HD domain; the sequence is VDAHTLNVIK…VGDETHLDYL (123 aa). 2 consecutive ACT domains span residues 706–789 and 816–896; these read QIFI…IIQR and ILEI…PSPS.

It belongs to the GlnD family. It depends on Mg(2+) as a cofactor.

It carries out the reaction [protein-PII]-L-tyrosine + UTP = [protein-PII]-uridylyl-L-tyrosine + diphosphate. It catalyses the reaction [protein-PII]-uridylyl-L-tyrosine + H2O = [protein-PII]-L-tyrosine + UMP + H(+). With respect to regulation, uridylyltransferase (UTase) activity is inhibited by glutamine, while glutamine activates uridylyl-removing (UR) activity. Modifies, by uridylylation and deuridylylation, the PII regulatory proteins (GlnB and homologs), in response to the nitrogen status of the cell that GlnD senses through the glutamine level. Under low glutamine levels, catalyzes the conversion of the PII proteins and UTP to PII-UMP and PPi, while under higher glutamine levels, GlnD hydrolyzes PII-UMP to PII and UMP (deuridylylation). Thus, controls uridylylation state and activity of the PII proteins, and plays an important role in the regulation of nitrogen fixation and metabolism. This is Bifunctional uridylyltransferase/uridylyl-removing enzyme from Stutzerimonas stutzeri (strain A1501) (Pseudomonas stutzeri).